Here is a 611-residue protein sequence, read N- to C-terminus: ATP-dependent zinc metalloprotease FtsH 1 (611 aa).

Residues 1 to 6 (MNDNNK) are Cytoplasmic-facing. The chain crosses the membrane as a helical span at residues 7-27 (IIRSMVLYLLIFIAIYAMVQL). The Extracellular portion of the chain corresponds to 28-107 (YSQSTEPITD…KSEPQVGPPW (80 aa)). A helical transmembrane segment spans residues 108 to 128 (WVQMLPSLFLIVIFIIFWYIF). 124-131 (FWYIFMQQ) is a binding site for ATP. The Cytoplasmic segment spans residues 129–611 (MQQAQGGGGS…GEDIEGVQFA (483 aa)). His-423 contacts Zn(2+). Glu-424 is an active-site residue. His-427 and Asp-499 together coordinate Zn(2+).

The protein in the central section; belongs to the AAA ATPase family. This sequence in the C-terminal section; belongs to the peptidase M41 family. As to quaternary structure, homohexamer. It depends on Zn(2+) as a cofactor.

Its subcellular location is the cell membrane. Acts as a processive, ATP-dependent zinc metallopeptidase for both cytoplasmic and membrane proteins. Plays a role in the quality control of integral membrane proteins. This Thermoanaerobacter sp. (strain X514) protein is ATP-dependent zinc metalloprotease FtsH 1.